The following is a 91-amino-acid chain: Auxin-responsive protein SAUR20 (91 aa).

It belongs to the ARG7 family.

It is found in the cell membrane. Its function is as follows. Functions as a positive effector of cell expansion through modulation of auxin transport. In Arabidopsis thaliana (Mouse-ear cress), this protein is Auxin-responsive protein SAUR20.